A 510-amino-acid polypeptide reads, in one-letter code: D-alanine--D-alanyl carrier protein ligase (510 aa).

157–158 (TS) provides a ligand contact to ATP. Residue D202 coordinates D-alanine. 297 to 302 (NTYGPT) is a binding site for ATP. Residue V306 participates in D-alanine binding. ATP is bound by residues D389 and K498. K498 lines the D-alanine pocket.

Belongs to the ATP-dependent AMP-binding enzyme family. DltA subfamily.

It is found in the cytoplasm. It catalyses the reaction holo-[D-alanyl-carrier protein] + D-alanine + ATP = D-alanyl-[D-alanyl-carrier protein] + AMP + diphosphate. Its pathway is cell wall biogenesis; lipoteichoic acid biosynthesis. Functionally, catalyzes the first step in the D-alanylation of lipoteichoic acid (LTA), the activation of D-alanine and its transfer onto the D-alanyl carrier protein (Dcp) DltC. In an ATP-dependent two-step reaction, forms a high energy D-alanyl-AMP intermediate, followed by transfer of the D-alanyl residue as a thiol ester to the phosphopantheinyl prosthetic group of the Dcp. D-alanylation of LTA plays an important role in modulating the properties of the cell wall in Gram-positive bacteria, influencing the net charge of the cell wall. This is D-alanine--D-alanyl carrier protein ligase from Listeria monocytogenes serotype 4a (strain HCC23).